Consider the following 490-residue polypeptide: Cytochrome P450 2C55 (490 aa).

Cysteine 435 lines the heme pocket.

This sequence belongs to the cytochrome P450 family. Heme serves as cofactor.

It localises to the endoplasmic reticulum membrane. It is found in the microsome membrane. It catalyses the reaction an organic molecule + reduced [NADPH--hemoprotein reductase] + O2 = an alcohol + oxidized [NADPH--hemoprotein reductase] + H2O + H(+). Functionally, metabolizes arachidonic acid mainly to 19-hydroxyeicosatetraenoic acid (HETE). The chain is Cytochrome P450 2C55 (Cyp2c55) from Rattus norvegicus (Rat).